The chain runs to 207 residues: Large ribosomal subunit protein uL4 (207 aa).

This sequence belongs to the universal ribosomal protein uL4 family. Part of the 50S ribosomal subunit.

One of the primary rRNA binding proteins, this protein initially binds near the 5'-end of the 23S rRNA. It is important during the early stages of 50S assembly. It makes multiple contacts with different domains of the 23S rRNA in the assembled 50S subunit and ribosome. In terms of biological role, forms part of the polypeptide exit tunnel. The chain is Large ribosomal subunit protein uL4 from Rickettsia peacockii (strain Rustic).